The following is a 440-amino-acid chain: MTTRQPLYKSLYVQVLVAITIGILLGHYYPETGVALKPLGDGFVKLIKMVIAPIIFCTVVSGIAGMQSMKSVGKTGGYALLYFEIVSTIALIIGLVVVNVVKPGAGMHIDVSTLNASSVAAYAAAGAQQTTVGFLLNVIPNTVVGAFANGDILQVLMFSVLFGFALHRLGSYGKPVLDMIDRFAHVMFNIINMIMKLAPIGAFGAMAFTIGQYGVGSLVQLGYLMACFYITCLLFVLVVLGGICRAHGFSVIKLIRYIREELLIVLGTSSSESALPRMLAKMERLGAKKSVVGLVIPTGYSFNLDGTSIYLTMAAVFIAQATDTTMDITHQITLLLVLLVASKGAAGVTGSGFIVLAATLSAVGHLPVAGLALILGIDRFMSEARALTNLVGNAVATVVVAKWVKEMDNDKLASELASGGAPLVDTRPTDDLGVAEGPAR.

Helical transmembrane passes span 15 to 35 (VLVA…TGVA), 46 to 66 (LIKM…IAGM), 78 to 98 (YALL…LVVV), 146 to 166 (AFAN…GFAL), 190 to 210 (IINM…AFTI), 224 to 244 (LMAC…GGIC), 291 to 311 (VVGL…SIYL), 332 to 352 (ITLL…TGSG), and 354 to 374 (IVLA…LALI). Residues 420 to 440 (GAPLVDTRPTDDLGVAEGPAR) form a disordered region.

It belongs to the dicarboxylate/amino acid:cation symporter (DAACS) (TC 2.A.23) family.

The protein localises to the cell inner membrane. Its function is as follows. Responsible for the transport of dicarboxylates such as succinate, fumarate, and malate from the periplasm across the membrane. The chain is C4-dicarboxylate transport protein from Pseudomonas putida (strain ATCC 700007 / DSM 6899 / JCM 31910 / BCRC 17059 / LMG 24140 / F1).